A 634-amino-acid polypeptide reads, in one-letter code: Threonine--tRNA ligase (634 aa).

The TGS domain maps to 1–61 (MFEVKLKDGS…DSDCEVQFVK (61 aa)). Positions 242–532 (DHRKIGKEMG…LIEHYAGKFP (291 aa)) are catalytic. Zn(2+) is bound by residues C333, H384, and H509.

It belongs to the class-II aminoacyl-tRNA synthetase family. In terms of assembly, homodimer. It depends on Zn(2+) as a cofactor.

Its subcellular location is the cytoplasm. The enzyme catalyses tRNA(Thr) + L-threonine + ATP = L-threonyl-tRNA(Thr) + AMP + diphosphate + H(+). Its function is as follows. Catalyzes the attachment of threonine to tRNA(Thr) in a two-step reaction: L-threonine is first activated by ATP to form Thr-AMP and then transferred to the acceptor end of tRNA(Thr). Also edits incorrectly charged L-seryl-tRNA(Thr). The protein is Threonine--tRNA ligase of Finegoldia magna (strain ATCC 29328 / DSM 20472 / WAL 2508) (Peptostreptococcus magnus).